Reading from the N-terminus, the 385-residue chain is Multidrug resistance protein MdtE (385 aa).

A signal peptide spans 1 to 20 (MNRRRKLLIPLLFCGAMLTA). The N-palmitoyl cysteine moiety is linked to residue Cys21. A lipid anchor (S-diacylglycerol cysteine) is attached at Cys21.

It belongs to the membrane fusion protein (MFP) (TC 8.A.1) family. In terms of assembly, homotrimer. Part of the tripartite efflux system MdtEF-TolC, which is composed of an inner membrane transporter, MdtF, a membrane fusion protein, MdtE, and an outer membrane component, TolC. The complex forms a large protein conduit and can translocate molecules across both the inner and outer membranes.

Its subcellular location is the cell inner membrane. Functionally, part of the tripartite efflux system MdtEF-TolC, which confers resistance to compounds such as rhodamine 6G, erythromycin, doxorubicin, ethidium bromide, TPP, SDS, deoxycholate, crystal violet and benzalkonium. This chain is Multidrug resistance protein MdtE (mdtE), found in Escherichia coli (strain K12).